Here is a 189-residue protein sequence, read N- to C-terminus: Ribosome maturation factor RimM (189 aa).

Residues 1 to 16 show a composition bias toward polar residues; sequence MAPSCPTRSRVWSSRT. The segment at 1 to 21 is disordered; the sequence is MAPSCPTRSRVWSSRTSPPPD. Residues 118–189 form the PRC barrel domain; sequence ENEFYWSDLI…TVEVDWGEDY (72 aa).

This sequence belongs to the RimM family. As to quaternary structure, binds ribosomal protein uS19.

The protein localises to the cytoplasm. Its function is as follows. An accessory protein needed during the final step in the assembly of 30S ribosomal subunit, possibly for assembly of the head region. Essential for efficient processing of 16S rRNA. May be needed both before and after RbfA during the maturation of 16S rRNA. It has affinity for free ribosomal 30S subunits but not for 70S ribosomes. The sequence is that of Ribosome maturation factor RimM from Thiobacillus denitrificans (strain ATCC 25259 / T1).